The sequence spans 340 residues: GTPase Obg (340 aa).

The Obg domain occupies 1–159 (MDFIDEVKLY…KYVVLKLKVL (159 aa)). The OBG-type G domain maps to 160–329 (SDVGIIGMPN…LNEKLKKGSS (170 aa)). Residues 166–173 (GMPNAGKS), 191–195 (FTTIK), 212–215 (DIPG), 279–282 (NKCD), and 310–312 (GED) each bind GTP. Residues S173 and T193 each coordinate Mg(2+).

This sequence belongs to the TRAFAC class OBG-HflX-like GTPase superfamily. OBG GTPase family. In terms of assembly, monomer. Requires Mg(2+) as cofactor.

The protein localises to the cytoplasm. Its function is as follows. An essential GTPase which binds GTP, GDP and possibly (p)ppGpp with moderate affinity, with high nucleotide exchange rates and a fairly low GTP hydrolysis rate. Plays a role in control of the cell cycle, stress response, ribosome biogenesis and in those bacteria that undergo differentiation, in morphogenesis control. In Wolbachia sp. subsp. Brugia malayi (strain TRS), this protein is GTPase Obg.